Reading from the N-terminus, the 247-residue chain is Transmembrane protein 33 (247 aa).

Position 2 is an N-acetylalanine (Ala2). Residues Ala2–Arg31 lie on the Lumenal side of the membrane. The chain crosses the membrane as a helical span at residues Leu32–Ala52. Over Ser53 to Leu100 the chain is Cytoplasmic. Residues Ile101–Leu121 traverse the membrane as a helical segment. Residues His122–Asn155 are Lumenal-facing. The chain crosses the membrane as a helical span at residues Ile156–Phe176. At Ser177–Ala247 the chain is on the cytoplasmic side.

Belongs to the PER33/POM33 family. In terms of assembly, interacts with EIF2AK3. Interacts with ARL6IP1, isoform RTN1-A of RTN1, isoform RTN2-B of RTN2, isoform 3 of RTN3 and isoform 3 of RTN4. Interacts with RNF5. Interacts with RNF26. Interacts with PKD2. As to expression, highly expressed in the liver and significantly in brain, lungs and kidneys.

The protein localises to the endoplasmic reticulum membrane. It is found in the melanosome. Its subcellular location is the nucleus envelope. In terms of biological role, acts as a regulator of the tubular endoplasmic reticulum (ER) network by modulating intracellular calcium homeostasis. Mechanistically, stimulates PKD2 calcium-dependent activity. Suppresses the RTN3/4-induced formation of the ER tubules. Positively regulates PERK-mediated and IRE1-mediated unfolded protein response signaling. Plays an essential role in VEGF-mediated release of Ca(2+) from ER stores during angiogenesis. Also plays a role in the modulation of innate immune signaling through the cGAS-STING pathway by interacting with RNF26. Participates in lipid metabolism by acting as a downstream effector of the pyruvate kinase/PKM. Forms a complex with RNF5 to facilitate polyubiquitination and subsequent degradation of SCAP on the ER membrane. The polypeptide is Transmembrane protein 33 (Tmem33) (Rattus norvegicus (Rat)).